Reading from the N-terminus, the 115-residue chain is UPF0295 protein BLi00901/BL05075 (115 aa).

2 consecutive transmembrane segments (helical) span residues 18 to 38 (LVFI…SVLL) and 41 to 61 (VFMI…FWIG).

The protein belongs to the UPF0295 family.

The protein localises to the cell membrane. The polypeptide is UPF0295 protein BLi00901/BL05075 (Bacillus licheniformis (strain ATCC 14580 / DSM 13 / JCM 2505 / CCUG 7422 / NBRC 12200 / NCIMB 9375 / NCTC 10341 / NRRL NRS-1264 / Gibson 46)).